The primary structure comprises 348 residues: Dihydroorotase (348 aa).

Zn(2+)-binding residues include His-17 and His-19. Substrate contacts are provided by residues 19-21 and Asn-45; that span reads HLR. Lys-103, His-140, and His-178 together coordinate Zn(2+). At Lys-103 the chain carries N6-carboxylysine. Residue His-140 participates in substrate binding. Leu-223 is a binding site for substrate. Asp-251 is a binding site for Zn(2+). Asp-251 is a catalytic residue. Substrate contacts are provided by His-255 and Ala-267.

Belongs to the metallo-dependent hydrolases superfamily. DHOase family. Class II DHOase subfamily. In terms of assembly, homodimer. The cofactor is Zn(2+).

It catalyses the reaction (S)-dihydroorotate + H2O = N-carbamoyl-L-aspartate + H(+). It functions in the pathway pyrimidine metabolism; UMP biosynthesis via de novo pathway; (S)-dihydroorotate from bicarbonate: step 3/3. Functionally, catalyzes the reversible cyclization of carbamoyl aspartate to dihydroorotate. This is Dihydroorotase from Salmonella arizonae (strain ATCC BAA-731 / CDC346-86 / RSK2980).